An 89-amino-acid chain; its full sequence is MALEKDEKTAIITDYQIHSSDTGSPQVQVALLTERINGLIEHLKVHPHDHHSRRGLLKLVGRRRRLLAYLASKDKDAYRKLIDSLGLRR.

It belongs to the universal ribosomal protein uS15 family. Part of the 30S ribosomal subunit. Forms a bridge to the 50S subunit in the 70S ribosome, contacting the 23S rRNA.

One of the primary rRNA binding proteins, it binds directly to 16S rRNA where it helps nucleate assembly of the platform of the 30S subunit by binding and bridging several RNA helices of the 16S rRNA. Its function is as follows. Forms an intersubunit bridge (bridge B4) with the 23S rRNA of the 50S subunit in the ribosome. This chain is Small ribosomal subunit protein uS15, found in Roseiflexus castenholzii (strain DSM 13941 / HLO8).